Reading from the N-terminus, the 189-residue chain is UPF0301 protein RrIowa_0061 (189 aa).

The protein belongs to the UPF0301 (AlgH) family.

This is UPF0301 protein RrIowa_0061 from Rickettsia rickettsii (strain Iowa).